The following is a 102-amino-acid chain: NADH-quinone oxidoreductase subunit K (102 aa).

Helical transmembrane passes span 5-25 (ALTGMMIVAAGLFAAGVFGVL), 30-50 (ILFQLISLEVALSGPALAFIA), and 63-83 (MFVLVLTLAAAEVAVGLALFL).

Belongs to the complex I subunit 4L family. In terms of assembly, NDH-1 is composed of 14 different subunits. Subunits NuoA, H, J, K, L, M, N constitute the membrane sector of the complex.

The protein resides in the cell inner membrane. It catalyses the reaction a quinone + NADH + 5 H(+)(in) = a quinol + NAD(+) + 4 H(+)(out). NDH-1 shuttles electrons from NADH, via FMN and iron-sulfur (Fe-S) centers, to quinones in the respiratory chain. The immediate electron acceptor for the enzyme in this species is believed to be ubiquinone. Couples the redox reaction to proton translocation (for every two electrons transferred, four hydrogen ions are translocated across the cytoplasmic membrane), and thus conserves the redox energy in a proton gradient. This is NADH-quinone oxidoreductase subunit K from Rhodopseudomonas palustris (strain BisB18).